The following is a 97-amino-acid chain: uncharacterized protein (97 aa).

This is an uncharacterized protein from Sulfolobus islandicus filamentous virus (isolate Iceland/Hveragerdi) (SIFV).